The sequence spans 262 residues: Putative hydro-lyase Mflv_5194 (262 aa).

The protein belongs to the D-glutamate cyclase family.

The polypeptide is Putative hydro-lyase Mflv_5194 (Mycolicibacterium gilvum (strain PYR-GCK) (Mycobacterium gilvum (strain PYR-GCK))).